A 397-amino-acid polypeptide reads, in one-letter code: MPPIVNNLLENDLYKFTMWQALLHSHPEAQTEYEFVCRNAPAYPLSELKADVERELDHLCTLAFRDDELLYLRSLRFMKSDFVDFLTVFRFQRKFITVAADGPALRIRAIGPQVHVMGFEIFVLCIVNELYLRRFDQQASLTEARRRLQEKIRLLKNFGKEATRKNPFEFFDFGVRRRFSAAWHEEVVVTLAREVPQYFTGTSNVHLAKKYGLTPIGTMAHEYLQAYQSFGVRLRDFQKAALEDWVQEYRGDLGIALTDVVGMDAFLADFDLYFAKLFDGLRHDSGDPIEWGEKALAHYARLRIDAGSKRLVFSDALDLPGAFSLYRHFADRTLTGFGIGTNLSNDTGIPALNIVMKLMACNGQPVAKLSDSAGKTLCRDETFLAYLRQVFHHPAVK.

His-221 bears the Phosphohistidine; by autocatalysis mark.

Belongs to the NAPRTase family. Transiently phosphorylated on a His residue during the reaction cycle. Phosphorylation strongly increases the affinity for substrates and increases the rate of nicotinate D-ribonucleotide production. Dephosphorylation regenerates the low-affinity form of the enzyme, leading to product release.

The catalysed reaction is nicotinate + 5-phospho-alpha-D-ribose 1-diphosphate + ATP + H2O = nicotinate beta-D-ribonucleotide + ADP + phosphate + diphosphate. The protein operates within cofactor biosynthesis; NAD(+) biosynthesis; nicotinate D-ribonucleotide from nicotinate: step 1/1. Functionally, catalyzes the synthesis of beta-nicotinate D-ribonucleotide from nicotinate and 5-phospho-D-ribose 1-phosphate at the expense of ATP. This is Nicotinate phosphoribosyltransferase from Herminiimonas arsenicoxydans.